The primary structure comprises 292 residues: MAFMKKYLLPLLGLFLAYYYYSANEEFRPEMLQGKKVIVTGASKGIGKEIAFHLAKMGAHVVVTARSKETLQEVVAHCLKLGAASAHYIAGTMEDMTFAEQFVAKAGKLMGGLDMLILNHITNASLMFFNNDIHHVRKEMEVNFLSYVVLTVAALPMLKQSNGSIVVVSSLAGKIAHPLIAPYSASKFALDGFFSAIRKEHALTNVNVSITLCVLGLIDTDTAMKEVSGKIDMKAAPKEECALEIIKGGALRQDEVYYGNLQWTPLLLGNPGKRLIEFLHLRKFDISKLVNN.

At 2–7 (AFMKKY) the chain is on the cytoplasmic side. The chain crosses the membrane as a helical; Signal-anchor for type II membrane protein span at residues 8–24 (LLPLLGLFLAYYYYSAN). At 25–292 (EEFRPEMLQG…KFDISKLVNN (268 aa)) the chain is on the lumenal side. Residues 41-67 (GASK…TARS), 92-93 (TM), and 119-121 (NHI) each bind NADP(+). 2 N-linked (GlcNAc...) asparagine glycosylation sites follow: asparagine 123 and asparagine 162. Serine 170 is a binding site for substrate. Catalysis depends on tyrosine 183, which acts as the Proton acceptor. 183-187 (YSASK) lines the NADP(+) pocket. Residue asparagine 207 is glycosylated (N-linked (GlcNAc...) asparagine). An NADP(+)-binding site is contributed by 218 to 222 (IDTDT).

This sequence belongs to the short-chain dehydrogenases/reductases (SDR) family. As to quaternary structure, homodimer. Post-translationally, glycosylated. As to expression, expressed in the eye.

The protein resides in the endoplasmic reticulum membrane. It localises to the microsome membrane. The catalysed reaction is an 11beta-hydroxysteroid + NADP(+) = an 11-oxosteroid + NADPH + H(+). The enzyme catalyses corticosterone + NADP(+) = 11-dehydrocorticosterone + NADPH + H(+). It catalyses the reaction cortisone + NADPH + H(+) = cortisol + NADP(+). It carries out the reaction a 7beta-hydroxysteroid + NADP(+) = a 7-oxosteroid + NADPH + H(+). The catalysed reaction is 7-oxocholesterol + NADPH + H(+) = 7beta-hydroxycholesterol + NADP(+). The enzyme catalyses chenodeoxycholate + NADP(+) = 7-oxolithocholate + NADPH + H(+). It catalyses the reaction 7-oxolithocholate + NADPH + H(+) = ursodeoxycholate + NADP(+). It carries out the reaction glycochenodeoxycholate + NADP(+) = 7-oxoglycolithocholate + NADPH + H(+). The catalysed reaction is taurochenodeoxycholate + NADP(+) = 7-oxotaurolithocholate + NADPH + H(+). The enzyme catalyses tauroursodeoxycholate + NADP(+) = 7-oxotaurolithocholate + NADPH + H(+). It catalyses the reaction glycoursodeoxycholate + NADP(+) = 7-oxoglycolithocholate + NADPH + H(+). It carries out the reaction 7-oxopregnenolone + NADPH + H(+) = 7beta-hydroxypregnenolone + NADP(+). The catalysed reaction is 3beta,7alpha-dihydroxyandrost-5-en-17-one + NADP(+) = 3beta-hydroxy-5-androstene-7,17-dione + NADPH + H(+). The enzyme catalyses 3beta-hydroxy-5-androstene-7,17-dione + NADPH + H(+) = 3beta,7beta-dihydroxyandrost-5-en-17-one + NADP(+). It catalyses the reaction 3beta-hydroxy-5alpha-androstane-7,17-dione + NADPH + H(+) = 3beta,7beta-dihydroxy-5alpha-androstan-17-one + NADP(+). Its pathway is steroid metabolism. Controls the reversible conversion of biologically active glucocorticoids such as cortisone to cortisol, and 11-dehydrocorticosterone to corticosterone in the presence of NADP(H). Participates in the corticosteroid receptor-mediated anti-inflammatory response, as well as metabolic and homeostatic processes. Plays a role in the secretion of aqueous humor in the eye, maintaining a normotensive, intraocular environment. Bidirectional in vitro, predominantly functions as a reductase in vivo, thereby increasing the concentration of active glucocorticoids. It has broad substrate specificity, besides glucocorticoids, it accepts other steroid and sterol substrates. It has broad substrate specificity, besides glucocorticoids, it accepts other steroid and sterol substrates. Interconverts 7-oxo- and 7-hydroxy-neurosteroids such as 7-oxopregnenolone and 7beta-hydroxypregnenolone, 7-oxodehydroepiandrosterone (3beta-hydroxy-5-androstene-7,17-dione) and 7beta-hydroxydehydroepiandrosterone (3beta,7beta-dihydroxyandrost-5-en-17-one), among others. Catalyzes the stereo-specific conversion of the major dietary oxysterol, 7-ketocholesterol (7-oxocholesterol), into the more polar 7-beta-hydroxycholesterol metabolite. 7-oxocholesterol is one of the most important oxysterols, it participates in several events such as induction of apoptosis, accumulation in atherosclerotic lesions, lipid peroxidation, and induction of foam cell formation. Mediates the 7-oxo reduction of 7-oxolithocholate mainly to chenodeoxycholate, and to a lesser extent to ursodeoxycholate, both in its free form and when conjugated to glycine or taurine, providing a link between glucocorticoid activation and bile acid metabolism. Catalyzes the synthesis of 7-beta-25-dihydroxycholesterol from 7-oxo-25-hydroxycholesterol in vitro, which acts as a ligand for the G-protein-coupled receptor (GPCR) Epstein-Barr virus-induced gene 2 (EBI2) and may thereby regulate immune cell migration. This is 11-beta-hydroxysteroid dehydrogenase 1 from Oryctolagus cuniculus (Rabbit).